A 471-amino-acid chain; its full sequence is Pachytene checkpoint protein 2 homolog (471 aa).

Gly-213–Thr-220 serves as a coordination point for ATP.

Belongs to the AAA ATPase family. PCH2 subfamily.

Functionally, plays a key role in chromosome recombination during meiosis. The protein is Pachytene checkpoint protein 2 homolog of Oryza sativa subsp. indica (Rice).